Reading from the N-terminus, the 90-residue chain is Probable Fe(2+)-trafficking protein (90 aa).

Belongs to the Fe(2+)-trafficking protein family.

Functionally, could be a mediator in iron transactions between iron acquisition and iron-requiring processes, such as synthesis and/or repair of Fe-S clusters in biosynthetic enzymes. The protein is Probable Fe(2+)-trafficking protein of Dechloromonas aromatica (strain RCB).